We begin with the raw amino-acid sequence, 254 residues long: Probable phosphomannomutase (254 aa).

The active-site Nucleophile is aspartate 14. The Mg(2+) site is built by aspartate 14 and aspartate 16. Aspartate 16 functions as the Proton donor/acceptor in the catalytic mechanism. The alpha-D-mannose 1-phosphate site is built by arginine 23, arginine 129, arginine 140, arginine 147, serine 185, and aspartate 187. Mg(2+) contacts are provided by aspartate 214, phenylalanine 226, aspartate 228, and threonine 231.

The protein belongs to the eukaryotic PMM family. As to quaternary structure, homodimer.

The protein localises to the cytoplasm. The catalysed reaction is alpha-D-mannose 1-phosphate = D-mannose 6-phosphate. Its pathway is nucleotide-sugar biosynthesis; GDP-alpha-D-mannose biosynthesis; alpha-D-mannose 1-phosphate from D-fructose 6-phosphate: step 2/2. Involved in the synthesis of the GDP-mannose and dolichol-phosphate-mannose required for a number of critical mannosyl transfer reactions. The polypeptide is Probable phosphomannomutase (Caenorhabditis elegans).